The following is a 141-amino-acid chain: Hemoglobin subunit alpha (141 aa).

In terms of domain architecture, Globin spans 1–141 (VLSPADKTNV…VSTVLTSKYR (141 aa)). S3 bears the Phosphoserine mark. Position 7 is an N6-succinyllysine (K7). Phosphothreonine is present on T8. An N6-succinyllysine modification is found at K11. K16 carries the N6-acetyllysine; alternate modification. Position 16 is an N6-succinyllysine; alternate (K16). A Phosphotyrosine modification is found at Y24. Position 35 is a phosphoserine (S35). At K40 the chain carries N6-succinyllysine. S49 bears the Phosphoserine mark. H58 contacts O2. H87 contributes to the heme b binding site. S102 carries the phosphoserine modification. At T108 the chain carries Phosphothreonine. Phosphoserine occurs at positions 124 and 131. T134 and T137 each carry phosphothreonine. S138 carries the phosphoserine modification.

The protein belongs to the globin family. In terms of assembly, heterotetramer of two alpha chains and two beta chains. As to expression, red blood cells.

Involved in oxygen transport from the lung to the various peripheral tissues. Functionally, hemopressin acts as an antagonist peptide of the cannabinoid receptor CNR1. Hemopressin-binding efficiently blocks cannabinoid receptor CNR1 and subsequent signaling. This Taphozous georgianus (Sharp-nosed tomb bat) protein is Hemoglobin subunit alpha (HBA).